The following is a 390-amino-acid chain: Serpin B4 (390 aa).

N-acetylmethionine is present on methionine 1.

Belongs to the serpin family. Ov-serpin subfamily. As to expression, squamous cells.

It is found in the cytoplasm. In terms of biological role, may act as a protease inhibitor to modulate the host immune response against tumor cells. The sequence is that of Serpin B4 (SERPINB4) from Homo sapiens (Human).